Here is a 167-residue protein sequence, read N- to C-terminus: uncharacterized protein (167 aa).

The chain crosses the membrane as a helical span at residues 5–27 (LILLTFVSFVFSKTFYYDVYVFF).

It localises to the membrane. This is an uncharacterized protein from Aquifex aeolicus (strain VF5).